The primary structure comprises 306 residues: 2-phospho-L-lactate transferase (306 aa).

A 7,8-didemethyl-8-hydroxy-5-deazariboflavin-binding site is contributed by D48.

The protein belongs to the CofD family. Homodimer. The cofactor is Mg(2+).

The catalysed reaction is (2S)-lactyl-2-diphospho-5'-guanosine + 7,8-didemethyl-8-hydroxy-5-deazariboflavin = oxidized coenzyme F420-0 + GMP + H(+). It functions in the pathway cofactor biosynthesis; coenzyme F420 biosynthesis. Functionally, catalyzes the transfer of the 2-phospholactate moiety from (2S)-lactyl-2-diphospho-5'-guanosine to 7,8-didemethyl-8-hydroxy-5-deazariboflavin (FO) with the formation of oxidized coenzyme F420-0 and GMP. The polypeptide is 2-phospho-L-lactate transferase (Methanococcoides burtonii (strain DSM 6242 / NBRC 107633 / OCM 468 / ACE-M)).